A 309-amino-acid chain; its full sequence is Probable 4-hydroxy-2-oxoglutarate aldolase, mitochondrial (309 aa).

49-50 (SN) is a binding site for substrate. Lys-173 acts as the Schiff-base intermediate with substrate in catalysis.

This sequence belongs to the DapA family.

It catalyses the reaction (4S)-4-hydroxy-2-oxoglutarate = glyoxylate + pyruvate. The enzyme catalyses (4R)-4-hydroxy-2-oxoglutarate = glyoxylate + pyruvate. Inhibited by divalent cations. In terms of biological role, catalyzes the final step in the metabolic pathway of hydroxyproline. Involved in osmoadaptation. The sequence is that of Probable 4-hydroxy-2-oxoglutarate aldolase, mitochondrial from Emericella nidulans (strain FGSC A4 / ATCC 38163 / CBS 112.46 / NRRL 194 / M139) (Aspergillus nidulans).